A 270-amino-acid chain; its full sequence is Basigin (270 aa).

Positions 1–21 (MAAVLFALLALALLRAGGASA) are cleaved as a signal peptide. The 82-residue stretch at 22–103 (AAGTVTTSVQ…TGEATLTVDG (82 aa)) folds into the Ig-like C2-type domain. Residues 22–207 (AAGTVTTSVQ…VTLRVRSRLA (186 aa)) lie on the Extracellular side of the membrane. Disulfide bonds link C41–C87 and C126–C185. N44, N75, N152, and N186 each carry an N-linked (GlcNAc...) asparagine glycan. The region spanning 105 to 203 (PRIKAVKKSE…DAAVVTLRVR (99 aa)) is the Ig-like V-type domain. The chain crosses the membrane as a helical span at residues 208 to 228 (ALWPFLGIVAEVLVLVTVIFI). Over 229 to 270 (YEKRRKPDEVLDDEDAGAAPLKSSGHHVNDDKGKNVRQRNAS) the chain is Cytoplasmic. The disordered stretch occupies residues 239–270 (LDDEDAGAAPLKSSGHHVNDDKGKNVRQRNAS). S252 bears the Phosphoserine mark.

In terms of assembly, homooligomer. Interacts with VEGFA, KDR/VEGFR2, PPIA/CYPA, SLC1A3, SLC16A12, SLC16A11, ATP1B2, MAG, L1CAM and AJAP1. Interacts with PPIL2; regulates BSG transport to the cell membrane. Interacts with XKR8; promoting its localization at the cell membrane. Interacts with SLC16A3; interaction mediates SLC16A3 targeting to the plasma membrane. Interacts with SLC16A1; interaction mediates SLC16A1 targeting to the plasma membrane. Interacts with SLC16A6; this interaction mediates targeting to the plasma membrane.

It is found in the cell membrane. The protein localises to the endoplasmic reticulum membrane. Its subcellular location is the basolateral cell membrane. Its function is as follows. Signaling receptor for cyclophilins, essential for PPIA/CYPA and PPIB/CYPB-dependent signaling related to chemotaxis and adhesion of immune cells. Plays an important role in targeting the monocarboxylate transporters SLC16A1/GLUT1, SLC16A3, SLC16A8, SLC16A11 and SLC16A12 to the plasma membrane. Acts as a coreceptor for vascular endothelial growth factor receptor 2 (KDR/VEGFR2) in endothelial cells enhancing its VEGFA-mediated activation and downstream signaling. Promotes angiogenesis through EPAS1/HIF2A-mediated up-regulation of VEGFA and KDR/VEGFR2 in endothelial cells. The sequence is that of Basigin (BSG) from Oryctolagus cuniculus (Rabbit).